A 114-amino-acid polypeptide reads, in one-letter code: Protein U68 (114 aa).

It belongs to the herpesviridae UL96 family.

The sequence is that of Protein U68 (U68) from Homo sapiens (Human).